Consider the following 158-residue polypeptide: Non-specific lipid transfer protein GPI-anchored 29 (158 aa).

A signal peptide spans 1 to 24 (MAYFSTATSLLLLVLSVSSPYVHG). 4 disulfides stabilise this stretch: Cys-28–Cys-71, Cys-38–Cys-55, Cys-56–Cys-95, and Cys-69–Cys-105. Asn-84 carries N-linked (GlcNAc...) asparagine glycosylation. Ser-134 is lipidated: GPI-anchor amidated serine. The propeptide at 135–158 (KGNSLIPISGFSFVIVTALAMFRI) is removed in mature form.

It belongs to the plant LTP family. In terms of tissue distribution, confined to the ovaries of the inflorescence.

The protein resides in the secreted. Its subcellular location is the cell membrane. In terms of biological role, probable lipid transfer protein. This is Non-specific lipid transfer protein GPI-anchored 29 from Arabidopsis thaliana (Mouse-ear cress).